The sequence spans 98 residues: MSAYKYYDLIRKPIITEKTTTLSEQNKYAFYVDKFAEKLTLKKAIEEIFKVKVKKVNILNVKGKKKRFKGIIGTQINRKKAIVTLEKDHNIDFAGGIK.

This sequence belongs to the universal ribosomal protein uL23 family. In terms of assembly, part of the 50S ribosomal subunit. Contacts protein L29, and trigger factor when it is bound to the ribosome.

One of the early assembly proteins it binds 23S rRNA. One of the proteins that surrounds the polypeptide exit tunnel on the outside of the ribosome. Forms the main docking site for trigger factor binding to the ribosome. The chain is Large ribosomal subunit protein uL23 from Rickettsia rickettsii (strain Iowa).